We begin with the raw amino-acid sequence, 99 residues long: Acylphosphatase-2 (99 aa).

Serine 2 bears the N-acetylserine mark. The 91-residue stretch at 9–99 (SVDYEVFGRV…LEYSNFSIRY (91 aa)) folds into the Acylphosphatase-like domain. Active-site residues include arginine 24 and asparagine 42. Position 93 is a phosphoserine (serine 93).

Belongs to the acylphosphatase family.

The enzyme catalyses an acyl phosphate + H2O = a carboxylate + phosphate + H(+). Its physiological role is not yet clear. This is Acylphosphatase-2 (ACYP2) from Cavia porcellus (Guinea pig).